A 487-amino-acid polypeptide reads, in one-letter code: Malonate-semialdehyde dehydrogenase 3 (487 aa).

The NAD(+) site is built by phenylalanine 154, lysine 178, glutamate 181, arginine 182, and serine 231. The Nucleophile role is filled by cysteine 286. Glutamate 386 is an NAD(+) binding site.

Belongs to the aldehyde dehydrogenase family. IolA subfamily. In terms of assembly, homotetramer.

It catalyses the reaction 3-oxopropanoate + NAD(+) + CoA + H2O = hydrogencarbonate + acetyl-CoA + NADH + H(+). It carries out the reaction 2-methyl-3-oxopropanoate + NAD(+) + CoA + H2O = propanoyl-CoA + hydrogencarbonate + NADH + H(+). It participates in polyol metabolism; myo-inositol degradation into acetyl-CoA; acetyl-CoA from myo-inositol: step 7/7. Functionally, catalyzes the oxidation of malonate semialdehyde (MSA) and methylmalonate semialdehyde (MMSA) into acetyl-CoA and propanoyl-CoA, respectively. Is involved in a myo-inositol catabolic pathway. Bicarbonate, and not CO2, is the end-product of the enzymatic reaction. The polypeptide is Malonate-semialdehyde dehydrogenase 3 (Bacillus cereus (strain ZK / E33L)).